We begin with the raw amino-acid sequence, 543 residues long: Ribonuclease Y (543 aa).

A helical membrane pass occupies residues 4–24 (IIMIPVATAIVSLLVGTVIGY). In terms of domain architecture, KH spans 233–296 (TVSVVDLPNE…EIAKRAMERL (64 aa)). Residues 359–452 (VLSHSIEVGK…VVAADTISSA (94 aa)) enclose the HD domain.

The protein belongs to the RNase Y family.

It localises to the cell membrane. Endoribonuclease that initiates mRNA decay. This is Ribonuclease Y from Lactobacillus helveticus (strain DPC 4571).